We begin with the raw amino-acid sequence, 102 residues long: Urease subunit beta (102 aa).

It belongs to the urease beta subunit family. In terms of assembly, heterotrimer of UreA (gamma), UreB (beta) and UreC (alpha) subunits. Three heterotrimers associate to form the active enzyme.

It is found in the cytoplasm. The enzyme catalyses urea + 2 H2O + H(+) = hydrogencarbonate + 2 NH4(+). It functions in the pathway nitrogen metabolism; urea degradation; CO(2) and NH(3) from urea (urease route): step 1/1. The protein is Urease subunit beta of Methylibium petroleiphilum (strain ATCC BAA-1232 / LMG 22953 / PM1).